We begin with the raw amino-acid sequence, 248 residues long: Protein G1-like6 (248 aa).

Residues 1-15 show a composition bias toward basic residues; sequence MDRHHHHHHHHHHHM. Disordered regions lie at residues 1–35, 50–84, and 198–248; these read MDRH…GATQ, GAGS…YESQ, and ARGI…FIIP. Positions 17–32 are enriched in gly residues; that stretch reads SGGGQDPAAGDGGAGG. Positions 50–59 are enriched in low complexity; it reads GAGSSSSGAG. Gly residues predominate over residues 60–69; sequence TSAGGGGGGP. Positions 70–79 are enriched in low complexity; the sequence is SPSSSSPSLS. Residues 80–207 form the ALOG domain; it reads RYESQKRRDW…ARGISYEKKK (128 aa). The Nuclear localization signal signature appears at 205–209; sequence KKKRK. Low complexity-rich tracts occupy residues 212–224 and 239–248; these read SSAG…SSEG and TSASPQFIIP.

It belongs to the plant homeotic and developmental regulators ALOG protein family.

It localises to the nucleus. Its function is as follows. Probable transcription regulator that acts as a developmental regulator by promoting cell growth in response to light. The protein is Protein G1-like6 of Oryza sativa subsp. indica (Rice).